The sequence spans 609 residues: MVKILGVKYFLHDSGVFYIDTKNKEIFGILTERVTRIKHDGGTVIPILNEYPKLKNIDYVAYPFEQTNLDFILFKHIDDYIKRTYKPKYIKEYAKYKKELSQNKTKFVLNNIYRPFIWEILAVYGLRKLLFKRFNNIYNKLGNLAIKRELKKIFRKDVSLYEHHLCHAASAYYFSPFFPKETLVFTLDGIGDWKYHSLWLFKEYDYRLVSYSSFDIICYDDVEGIFKGASIGHIYSLFTEILGFTPNSDEGKTEALAAYGKPNGELYNLLKKGYKINKEKLRWEHDINILKKLHNKQYLQKWKEKIGDENFAATIQRWLEDTVVEYLNIVYEKFKIQRLAMAGGVVANVIMNLNIFERTPFEELYIFPAMGDDGVAAGAAILKAVELGEDISWLKDLEMPYWGPNYSREDVEKELKKDKWKDKITYEYIGEKWPEIAAEMIAKGNIIAVYQGKMEFGPRALGNRSILADPRDPKTRDKINSTVKRRPWFQPFCPSVLEEERERLFEKSYKHKHMAIAFRMKKEFWDKLPSAMHIDGTARPQFVEEKDNPNYYRLLKKFKEITGYGIVINTSFNLHGRTIVRTPEDAITDFIDCNIDAMFIEGYLVKRKI.

This sequence belongs to the NodU/CmcH family.

This is an uncharacterized protein from Methanocaldococcus jannaschii (strain ATCC 43067 / DSM 2661 / JAL-1 / JCM 10045 / NBRC 100440) (Methanococcus jannaschii).